The following is a 142-amino-acid chain: Large ribosomal subunit protein uL11 (142 aa).

It belongs to the universal ribosomal protein uL11 family. Part of the ribosomal stalk of the 50S ribosomal subunit. Interacts with L10 and the large rRNA to form the base of the stalk. L10 forms an elongated spine to which L12 dimers bind in a sequential fashion forming a multimeric L10(L12)X complex. In terms of processing, one or more lysine residues are methylated.

Forms part of the ribosomal stalk which helps the ribosome interact with GTP-bound translation factors. This is Large ribosomal subunit protein uL11 from Buchnera aphidicola subsp. Schizaphis graminum (strain Sg).